The chain runs to 180 residues: Interleukin-17B (180 aa).

Positions 1–20 are cleaved as a signal peptide; that stretch reads MDWPHNLLFLLTISIFLGLG. A disordered region spans residues 22–44; the sequence is PRSPKSKRKGQGRPGPLAPGPHQ. An N-linked (GlcNAc...) asparagine glycan is attached at Asn75. 2 cysteine pairs are disulfide-bonded: Cys121–Cys176 and Cys126–Cys178.

This sequence belongs to the IL-17 family. As to expression, expressed in adult pancreas, small intestine, stomach, spinal cord and testis. Less pronounced expression in prostate, colon mucosal lining, and ovary.

The protein localises to the secreted. Its function is as follows. Stimulates the release of tumor necrosis factor alpha and IL-1-beta from the monocytic cell line THP-1. The sequence is that of Interleukin-17B (IL17B) from Homo sapiens (Human).